The following is a 31-amino-acid chain: Cyclotide cter-R (31 aa).

Residues 1–31 (GIPCGESCVFIPCTVTALLGCSCKDKVCYKN) constitute a cross-link (cyclopeptide (Gly-Asn)). Intrachain disulfides connect Cys-4-Cys-21, Cys-8-Cys-23, and Cys-13-Cys-28.

Post-translationally, this is a cyclic peptide.

It is found in the secreted. Its function is as follows. Probably participates in a plant defense mechanism. The chain is Cyclotide cter-R from Clitoria ternatea (Butterfly pea).